A 194-amino-acid polypeptide reads, in one-letter code: MSAITITDAAHDYLADLLSKQNTPGIGIRIFITQPGTQYAETCIAYCKPGEEKPDDTAVGLKSFTAYLDAVSVPFLEDALVDYATDRMGGQLTIKAPNAKVPMVNEDSPINERINYYLQTEINPGLASHGGQVSLVDVVDDGIAVLQFGGGCQGCGQADVTLKEGIERTLLERIPELKGVRDVTDHSQKENAYY.

Residues cysteine 152 and cysteine 155 each contribute to the [4Fe-4S] cluster site.

Belongs to the NfuA family. In terms of assembly, homodimer. Requires [4Fe-4S] cluster as cofactor.

In terms of biological role, involved in iron-sulfur cluster biogenesis. Binds a 4Fe-4S cluster, can transfer this cluster to apoproteins, and thereby intervenes in the maturation of Fe/S proteins. Could also act as a scaffold/chaperone for damaged Fe/S proteins. This Pseudomonas putida (strain ATCC 700007 / DSM 6899 / JCM 31910 / BCRC 17059 / LMG 24140 / F1) protein is Fe/S biogenesis protein NfuA.